A 520-amino-acid polypeptide reads, in one-letter code: MTNVADLTSVEKIIVLDFGSQFNQLITRRIREFGVFSELLSHRTTAEEIRKIAPKGIIFSGGPNSVYDKDAFSIDPEIYELGIPILGICYGMQLMTHNLGGKVEPAANREYGKAELEILGDATLFQGTPAKQTVWMSHGDLVTEIAPGFEKVGTSNDCPIASIEDANRKFYGVQFHPEVRHSEYGNDLLRHFAFDVCGCTGDWSMENFIDMEVAKIREQVGDKKVLLGLSGGVDSSVVGVLLQKAIGDQLTCIFVDHGLLRKGEAEQVMESLGGKFGLNIIKVDAKERFLSKLAGVSDPEQKRKIIGNEFVYVFDDEATKLAGEEGVSFLAQGTLYTDVIESGTETAQTIKSHHNVGGLPEDMQFELIEPLNTLFKDEVRALGTELGMPDAIVWRQPFPGPGLGIRVLGEITEDKLQIVRDSDAILREEIAAAGLDRDIWQYFTVLPGIRSVGVMGDGRTYDYTVGIRAVTSIDGMTADFARIPWDVLQKISVRIVNEVAHVNRIVYDITSKPPATVEWE.

A Glutamine amidotransferase type-1 domain is found at 12–202 (KIIVLDFGSQ…AFDVCGCTGD (191 aa)). The Nucleophile role is filled by cysteine 89. Residues histidine 176 and glutamate 178 contribute to the active site. Residues 203-395 (WSMENFIDME…LGMPDAIVWR (193 aa)) form the GMPS ATP-PPase domain. 230 to 236 (SGGVDSS) contributes to the ATP binding site.

In terms of assembly, homodimer.

The enzyme catalyses XMP + L-glutamine + ATP + H2O = GMP + L-glutamate + AMP + diphosphate + 2 H(+). It functions in the pathway purine metabolism; GMP biosynthesis; GMP from XMP (L-Gln route): step 1/1. Catalyzes the synthesis of GMP from XMP. This is GMP synthase [glutamine-hydrolyzing] from Enterococcus faecalis (strain ATCC 700802 / V583).